A 113-amino-acid polypeptide reads, in one-letter code: Large ribosomal subunit protein uL24 (113 aa).

The protein belongs to the universal ribosomal protein uL24 family. Part of the 50S ribosomal subunit.

Functionally, one of two assembly initiator proteins, it binds directly to the 5'-end of the 23S rRNA, where it nucleates assembly of the 50S subunit. One of the proteins that surrounds the polypeptide exit tunnel on the outside of the subunit. The chain is Large ribosomal subunit protein uL24 from Synechococcus elongatus (strain ATCC 33912 / PCC 7942 / FACHB-805) (Anacystis nidulans R2).